A 224-amino-acid chain; its full sequence is Cytidylate kinase (224 aa).

Residue 11-19 (GPAAAGKST) coordinates ATP.

It belongs to the cytidylate kinase family. Type 1 subfamily.

It is found in the cytoplasm. The catalysed reaction is CMP + ATP = CDP + ADP. The enzyme catalyses dCMP + ATP = dCDP + ADP. In Bacillus velezensis (strain DSM 23117 / BGSC 10A6 / LMG 26770 / FZB42) (Bacillus amyloliquefaciens subsp. plantarum), this protein is Cytidylate kinase.